An 896-amino-acid polypeptide reads, in one-letter code: Alanine--tRNA ligase (896 aa).

Histidine 599, histidine 603, cysteine 707, and histidine 711 together coordinate Zn(2+).

It belongs to the class-II aminoacyl-tRNA synthetase family. It depends on Zn(2+) as a cofactor.

The protein localises to the cytoplasm. It carries out the reaction tRNA(Ala) + L-alanine + ATP = L-alanyl-tRNA(Ala) + AMP + diphosphate. Catalyzes the attachment of alanine to tRNA(Ala) in a two-step reaction: alanine is first activated by ATP to form Ala-AMP and then transferred to the acceptor end of tRNA(Ala). Also edits incorrectly charged Ser-tRNA(Ala) and Gly-tRNA(Ala) via its editing domain. The polypeptide is Alanine--tRNA ligase (Pyrobaculum calidifontis (strain DSM 21063 / JCM 11548 / VA1)).